The chain runs to 140 residues: Probable glycine cleavage system H protein (140 aa).

In terms of domain architecture, Lipoyl-binding spans 22 to 114 (RAIIGITSYA…YEEGWIVVLE (93 aa)). N6-lipoyllysine is present on lysine 63.

The protein belongs to the GcvH family. In terms of assembly, the glycine cleavage system is composed of four proteins: P, T, L and H. (R)-lipoate serves as cofactor.

Functionally, the glycine cleavage system catalyzes the degradation of glycine. The H protein shuttles the methylamine group of glycine from the P protein to the T protein. The protein is Probable glycine cleavage system H protein of Korarchaeum cryptofilum (strain OPF8).